A 198-amino-acid chain; its full sequence is TM2 domain-containing protein 2 (198 aa).

An N-terminal signal peptide occupies residues 1–27 (MRWPVPPLGYLLLGGQGLLLTFSLISS). Over 28 to 128 (QNNTSPVTYP…FLRGNRPCIK (101 aa)) the chain is Extracellular. 3 N-linked (GlcNAc...) asparagine glycosylation sites follow: asparagine 29, asparagine 40, and asparagine 76. A helical transmembrane segment spans residues 129-149 (YTGHYFITTLLYSFFLGCFGV). Residues 131-179 (GHYFITTLLYSFFLGCFGVDRFCLGHTGTAVGKLLTWGGLGIWWFVDLI) enclose the TM2 domain. At 150–166 (DRFCLGHTGTAVGKLLT) the chain is on the cytoplasmic side. The helical transmembrane segment at 167–187 (WGGLGIWWFVDLILLITGGLM) threads the bilayer. The Extracellular portion of the chain corresponds to 188–198 (PSDNSNWCTIY).

The protein belongs to the TM2 family.

The protein localises to the membrane. This Xenopus laevis (African clawed frog) protein is TM2 domain-containing protein 2 (tm2d2).